A 352-amino-acid chain; its full sequence is Speedy protein E18 (352 aa).

Over residues 1–12 the composition is skewed to basic residues; it reads MDRTKTRFRKRG. The disordered stretch occupies residues 1–90; sequence MDRTKTRFRK…EPEKELAPEP (90 aa). Over residues 16-39 the composition is skewed to polar residues; sequence GKITTSRQPHPQNEQSLQRSTSGY. Positions 76-90 are enriched in acidic residues; the sequence is DESEEEPEKELAPEP.

It belongs to the Speedy/Ringo family.

The sequence is that of Speedy protein E18 from Homo sapiens (Human).